A 119-amino-acid polypeptide reads, in one-letter code: Large ribosomal subunit protein bL20c (119 aa).

It belongs to the bacterial ribosomal protein bL20 family.

Its subcellular location is the plastid. The protein localises to the chloroplast. Its function is as follows. Binds directly to 23S ribosomal RNA and is necessary for the in vitro assembly process of the 50S ribosomal subunit. It is not involved in the protein synthesizing functions of that subunit. The polypeptide is Large ribosomal subunit protein bL20c (Amborella trichopoda).